We begin with the raw amino-acid sequence, 120 residues long: NAD(P)H-quinone oxidoreductase subunit 3, chloroplastic (120 aa).

A run of 3 helical transmembrane segments spans residues 9–29, 64–84, and 88–108; these read IFWA…FISG, MFAL…PWAM, and VLGV…ILGL.

This sequence belongs to the complex I subunit 3 family. NDH is composed of at least 16 different subunits, 5 of which are encoded in the nucleus.

It localises to the plastid. The protein resides in the chloroplast thylakoid membrane. It catalyses the reaction a plastoquinone + NADH + (n+1) H(+)(in) = a plastoquinol + NAD(+) + n H(+)(out). The catalysed reaction is a plastoquinone + NADPH + (n+1) H(+)(in) = a plastoquinol + NADP(+) + n H(+)(out). Functionally, NDH shuttles electrons from NAD(P)H:plastoquinone, via FMN and iron-sulfur (Fe-S) centers, to quinones in the photosynthetic chain and possibly in a chloroplast respiratory chain. The immediate electron acceptor for the enzyme in this species is believed to be plastoquinone. Couples the redox reaction to proton translocation, and thus conserves the redox energy in a proton gradient. This Barbarea verna (Land cress) protein is NAD(P)H-quinone oxidoreductase subunit 3, chloroplastic.